We begin with the raw amino-acid sequence, 320 residues long: Adhesin MafA 1/4 (320 aa).

Positions 1 to 18 (MRARLLIPILFSVFILSA) are cleaved as a signal peptide. Cys-19 carries N-palmitoyl cysteine lipidation. Cys-19 is lipidated: S-diacylglycerol cysteine. The segment at 287–320 (NHTGNSAPSVEADNSHEGYGYSDEAVRQHRQGQP) is disordered.

Belongs to the MafA family.

It localises to the cell outer membrane. The sequence is that of Adhesin MafA 1/4 (mafA1) from Neisseria gonorrhoeae (strain ATCC 700825 / FA 1090).